Reading from the N-terminus, the 211-residue chain is MFSTFLTALRTCVVTMVLTGLLYPLAVTGLAQLLFPGEANGSWVKDGRGRVVGSALIGQGFTRAGYFHPRPSAAGAGYDGAASSGSNLGPTSLKLKERAAAELERLRRENPDAAGPVPAELVTTSASGLDPHLSPETARWQAARVARARGVALERVLDVVDARVEGRTFGVLGEPRVNVLLLNLALDRRFGPLPDAAPGVGGRASPGQGAP.

The helical transmembrane segment at 13–35 (VVTMVLTGLLYPLAVTGLAQLLF) threads the bilayer.

It belongs to the KdpC family. The system is composed of three essential subunits: KdpA, KdpB and KdpC.

The protein localises to the cell membrane. Functionally, part of the high-affinity ATP-driven potassium transport (or Kdp) system, which catalyzes the hydrolysis of ATP coupled with the electrogenic transport of potassium into the cytoplasm. This subunit acts as a catalytic chaperone that increases the ATP-binding affinity of the ATP-hydrolyzing subunit KdpB by the formation of a transient KdpB/KdpC/ATP ternary complex. In Myxococcus xanthus, this protein is Potassium-transporting ATPase KdpC subunit.